The following is a 197-amino-acid chain: MECGVETLLPLVVGYVLGSVPFGLILTRLTGAGDLRAIGSGNIGATNVLRTGKKGLAAATLLLDLGKGLAAVLIVRHVWPGAEALAALAAVLGHCFPVWLRFKGGKGVATLMGVSLALAWPIGLVYAVTWLGVLFLSRISSLGGMSAAVVAPVAAAVLGYAPYVPVLALLALLVLYLHRENIARLRAGTEPKVGSRK.

Helical transmembrane passes span 7–27, 55–75, 78–98, 116–136, and 157–177; these read TLLP…LILT, GLAA…VLIV, VWPG…CFPV, LALA…VLFL, and VLGY…VLYL.

This sequence belongs to the PlsY family. In terms of assembly, probably interacts with PlsX.

It is found in the cell inner membrane. It catalyses the reaction an acyl phosphate + sn-glycerol 3-phosphate = a 1-acyl-sn-glycero-3-phosphate + phosphate. It functions in the pathway lipid metabolism; phospholipid metabolism. Its function is as follows. Catalyzes the transfer of an acyl group from acyl-phosphate (acyl-PO(4)) to glycerol-3-phosphate (G3P) to form lysophosphatidic acid (LPA). This enzyme utilizes acyl-phosphate as fatty acyl donor, but not acyl-CoA or acyl-ACP. The protein is Glycerol-3-phosphate acyltransferase of Novosphingobium aromaticivorans (strain ATCC 700278 / DSM 12444 / CCUG 56034 / CIP 105152 / NBRC 16084 / F199).